The primary structure comprises 223 residues: Ribose-5-phosphate isomerase A (223 aa).

Substrate contacts are provided by residues 32–35 (TGST), 83–86 (DGAD), and 96–99 (KGGG). The Proton acceptor role is filled by E105. K123 provides a ligand contact to substrate.

It belongs to the ribose 5-phosphate isomerase family. As to quaternary structure, homodimer.

The catalysed reaction is aldehydo-D-ribose 5-phosphate = D-ribulose 5-phosphate. It functions in the pathway carbohydrate degradation; pentose phosphate pathway; D-ribose 5-phosphate from D-ribulose 5-phosphate (non-oxidative stage): step 1/1. In terms of biological role, catalyzes the reversible conversion of ribose-5-phosphate to ribulose 5-phosphate. The chain is Ribose-5-phosphate isomerase A from Acinetobacter baumannii (strain AYE).